Consider the following 912-residue polypeptide: Effector protein hopAE1 (912 aa).

Positions 1 to 13 (MMPSQITRSSHSS) are enriched in polar residues. A disordered region spans residues 1–32 (MMPSQITRSSHSSLPEVAPASGDATGVSEQTP).

Belongs to the HopW family.

Its subcellular location is the secreted. The sequence is that of Effector protein hopAE1 (hopAE1) from Pseudomonas savastanoi pv. phaseolicola (strain 1448A / Race 6) (Pseudomonas syringae pv. phaseolicola (strain 1448A / Race 6)).